A 259-amino-acid chain; its full sequence is Global transcriptional regulator CodY (259 aa).

The tract at residues 1-155 is GAF domain; that stretch reads MDLLSKTRRI…GATVVGMEIL (155 aa). A DNA-binding region (H-T-H motif) is located at residues 203–222; it reads ASKIADRVGITRSVIVNALR.

This sequence belongs to the CodY family.

It is found in the cytoplasm. In terms of biological role, DNA-binding global transcriptional regulator which is involved in the adaptive response to starvation and acts by directly or indirectly controlling the expression of numerous genes in response to nutrient availability. During rapid exponential growth, CodY is highly active and represses genes whose products allow adaptation to nutrient depletion. This is Global transcriptional regulator CodY from Brevibacillus brevis (strain 47 / JCM 6285 / NBRC 100599).